Reading from the N-terminus, the 74-residue chain is uncharacterized protein (74 aa).

The signal sequence occupies residues 1–25; that stretch reads MMMTDLPENIRKTAVALLRLGEATA.

This is an uncharacterized protein from Archaeoglobus fulgidus (strain ATCC 49558 / DSM 4304 / JCM 9628 / NBRC 100126 / VC-16).